The primary structure comprises 366 residues: 3-dehydroquinate synthase (366 aa).

Residues 73–78 (DGERAK), 107–111 (GVVGD), 131–132 (TT), Lys144, and Lys153 contribute to the NAD(+) site. Zn(2+)-binding residues include Glu186, His249, and His266.

It belongs to the sugar phosphate cyclases superfamily. Dehydroquinate synthase family. Co(2+) is required as a cofactor. The cofactor is Zn(2+). Requires NAD(+) as cofactor.

The protein localises to the cytoplasm. It carries out the reaction 7-phospho-2-dehydro-3-deoxy-D-arabino-heptonate = 3-dehydroquinate + phosphate. The protein operates within metabolic intermediate biosynthesis; chorismate biosynthesis; chorismate from D-erythrose 4-phosphate and phosphoenolpyruvate: step 2/7. In terms of biological role, catalyzes the conversion of 3-deoxy-D-arabino-heptulosonate 7-phosphate (DAHP) to dehydroquinate (DHQ). This chain is 3-dehydroquinate synthase, found in Koribacter versatilis (strain Ellin345).